The primary structure comprises 32 residues: MSDIN-like toxin proprotein 11 (32 aa).

Positions 1 to 10 are excised as a propeptide; the sequence is MSDINATRLP. A disordered region spans residues 1 to 32; sequence MSDINATRLPGMEPPSPMPCVGDADNFTLTRG. The cyclopeptide (Gly-Pro) cross-link spans 11–19; sequence GMEPPSPMP. The propeptide occupies 20–32; the sequence is CVGDADNFTLTRG.

This sequence belongs to the MSDIN fungal toxin family. In terms of processing, processed by the macrocyclase-peptidase enzyme POPB to yield a toxic cyclic nonapeptide. POPB first removes 10 residues from the N-terminus. Conformational trapping of the remaining peptide forces the enzyme to release this intermediate rather than proceed to macrocyclization. The enzyme rebinds the remaining peptide in a different conformation and catalyzes macrocyclization of the N-terminal 9 residues.

Functionally, probable toxin that belongs to the MSDIN-like toxin family responsible for a large number of food poisoning cases and deaths. The chain is MSDIN-like toxin proprotein 11 from Amanita bisporigera (Destroying angel).